Reading from the N-terminus, the 458-residue chain is tRNA modification GTPase MnmE (458 aa).

3 residues coordinate (6S)-5-formyl-5,6,7,8-tetrahydrofolate: Arg22, Glu85, and Arg124. Residues 220–379 (GIKTVIVGRP…LEEHISELVF (160 aa)) form the TrmE-type G domain. A K(+)-binding site is contributed by Asn230. GTP is bound by residues 230 to 235 (NVGKSS), 249 to 255 (TEIPGTT), and 274 to 277 (DTAG). Mg(2+) is bound at residue Ser234. K(+) is bound by residues Thr249, Ile251, and Thr254. Position 255 (Thr255) interacts with Mg(2+). Lys458 is a (6S)-5-formyl-5,6,7,8-tetrahydrofolate binding site.

Belongs to the TRAFAC class TrmE-Era-EngA-EngB-Septin-like GTPase superfamily. TrmE GTPase family. Homodimer. Heterotetramer of two MnmE and two MnmG subunits. K(+) serves as cofactor.

It localises to the cytoplasm. Exhibits a very high intrinsic GTPase hydrolysis rate. Involved in the addition of a carboxymethylaminomethyl (cmnm) group at the wobble position (U34) of certain tRNAs, forming tRNA-cmnm(5)s(2)U34. The sequence is that of tRNA modification GTPase MnmE from Natranaerobius thermophilus (strain ATCC BAA-1301 / DSM 18059 / JW/NM-WN-LF).